Reading from the N-terminus, the 484-residue chain is Calcium-dependent protein kinase 26 (484 aa).

Residues 24–282 (YSLGHKLGQG…AHQVLRHPWI (259 aa)) enclose the Protein kinase domain. Residues 30 to 38 (LGQGQFGTT) and K53 each bind ATP. The active-site Proton acceptor is the D148. S188 is subject to Phosphoserine. An autoinhibitory domain region spans residues 288-318 (APDRALDPAVLSRLKQFSAMNKLKQMALRVI). EF-hand domains are found at residues 325 to 360 (EEIA…YGST), 361 to 396 (LKDT…LNKL), 397 to 432 (EREE…QGMS), and 436 to 466 (LEDV…GIVG). Residues D338, D340, S342, E349, D374, D376, S378, T380, E385, D410, D412, S414, Y416, E421, D444, D446, D448, R450, and E455 each coordinate Ca(2+).

This sequence belongs to the protein kinase superfamily. Ser/Thr protein kinase family. CDPK subfamily.

It carries out the reaction L-seryl-[protein] + ATP = O-phospho-L-seryl-[protein] + ADP + H(+). It catalyses the reaction L-threonyl-[protein] + ATP = O-phospho-L-threonyl-[protein] + ADP + H(+). With respect to regulation, activated by calcium. Autophosphorylation may play an important role in the regulation of the kinase activity. Functionally, may play a role in signal transduction pathways that involve calcium as a second messenger. The sequence is that of Calcium-dependent protein kinase 26 (CPK26) from Arabidopsis thaliana (Mouse-ear cress).